We begin with the raw amino-acid sequence, 160 residues long: Troponin C, isoform 2 (160 aa).

4 consecutive EF-hand domains span residues 15-50 (DQIE…MGQA), 51-86 (FEER…FVVN), 92-127 (GLEE…LDDN), and 128-160 (VSEE…MSGE). Residues D64, D66, S68, E70, and E75 each contribute to the Ca(2+) site. The Ca(2+) site is built by D141, D143, S145, T147, and E152.

This sequence belongs to the troponin C family. Pharyngeal muscle.

The sequence is that of Troponin C, isoform 2 (tnc-2) from Caenorhabditis elegans.